The primary structure comprises 181 residues: Protein GrpE (181 aa).

This sequence belongs to the GrpE family. In terms of assembly, homodimer.

Its subcellular location is the cytoplasm. Participates actively in the response to hyperosmotic and heat shock by preventing the aggregation of stress-denatured proteins, in association with DnaK and GrpE. It is the nucleotide exchange factor for DnaK and may function as a thermosensor. Unfolded proteins bind initially to DnaJ; upon interaction with the DnaJ-bound protein, DnaK hydrolyzes its bound ATP, resulting in the formation of a stable complex. GrpE releases ADP from DnaK; ATP binding to DnaK triggers the release of the substrate protein, thus completing the reaction cycle. Several rounds of ATP-dependent interactions between DnaJ, DnaK and GrpE are required for fully efficient folding. The protein is Protein GrpE of Leptothrix cholodnii (strain ATCC 51168 / LMG 8142 / SP-6) (Leptothrix discophora (strain SP-6)).